The primary structure comprises 201 residues: 3-isopropylmalate dehydratase small subunit (201 aa).

Belongs to the LeuD family. LeuD type 1 subfamily. In terms of assembly, heterodimer of LeuC and LeuD.

The catalysed reaction is (2R,3S)-3-isopropylmalate = (2S)-2-isopropylmalate. Its pathway is amino-acid biosynthesis; L-leucine biosynthesis; L-leucine from 3-methyl-2-oxobutanoate: step 2/4. Functionally, catalyzes the isomerization between 2-isopropylmalate and 3-isopropylmalate, via the formation of 2-isopropylmaleate. This is 3-isopropylmalate dehydratase small subunit from Cereibacter sphaeroides (strain ATCC 17029 / ATH 2.4.9) (Rhodobacter sphaeroides).